The following is a 223-amino-acid chain: Family of serine hydrolases 2 (223 aa).

Catalysis depends on charge relay system residues S110, D174, and H203.

Belongs to the AB hydrolase 3 family.

Its subcellular location is the cytoplasm. Functionally, serine hydrolase of unknown specificity. The chain is Family of serine hydrolases 2 (FSH2) from Saccharomyces cerevisiae (strain ATCC 204508 / S288c) (Baker's yeast).